We begin with the raw amino-acid sequence, 125 residues long: Lymphocyte antigen 6 complex locus protein G6c (125 aa).

Residues Met-1–Ala-18 form the signal peptide. The UPAR/Ly6 domain maps to Ile-20–Val-111. 3 cysteine pairs are disulfide-bonded: Cys-22–Cys-47, Cys-25–Cys-33, and Cys-39–Cys-65. N-linked (GlcNAc...) asparagine glycosylation is present at Asn-88. Cys-92 and Cys-97 form a disulfide bridge. Ser-99 carries GPI-anchor amidated serine lipidation. Residues Ala-100–His-125 constitute a propeptide, removed in mature form.

As to quaternary structure, monomer. N-glycosylated. Highly expressed at the leading edges of cells, on filopodia.

Its subcellular location is the cell membrane. This chain is Lymphocyte antigen 6 complex locus protein G6c (LY6G6C), found in Homo sapiens (Human).